The following is a 75-amino-acid chain: Transcription attenuation protein MtrB (75 aa).

This sequence belongs to the MtrB family. In terms of assembly, oligomer of 11 identical subunits arranged in doughnut-like structure.

Its function is as follows. Required for transcription attenuation control in the Trp operon. This trans-acting factor seems to recognize a 10 bases nucleotide sequence in the Trp leader transcript causing transcription termination. Binds the leader RNA only in presence of L-tryptophan. The polypeptide is Transcription attenuation protein MtrB (Bacillus velezensis (strain DSM 23117 / BGSC 10A6 / LMG 26770 / FZB42) (Bacillus amyloliquefaciens subsp. plantarum)).